The following is a 488-amino-acid chain: Multidrug resistance outer membrane protein MdtP (488 aa).

Residues 1-23 form the signal peptide; it reads MINRQLSRLLLCSILGSTTLISG. A lipid anchor (N-palmitoyl cysteine) is attached at Cys24. Cys24 is lipidated: S-diacylglycerol cysteine.

The protein belongs to the outer membrane factor (OMF) (TC 1.B.17) family. In terms of assembly, could be part of a tripartite efflux system composed of MdtN, MdtO and MdtP.

It localises to the cell outer membrane. In terms of biological role, could be involved in resistance to puromycin, acriflavine and tetraphenylarsonium chloride. This Escherichia coli O157:H7 protein is Multidrug resistance outer membrane protein MdtP (mdtP).